A 251-amino-acid chain; its full sequence is Aspartate/glutamate leucyltransferase (251 aa).

The protein belongs to the R-transferase family. Bpt subfamily.

Its subcellular location is the cytoplasm. It catalyses the reaction N-terminal L-glutamyl-[protein] + L-leucyl-tRNA(Leu) = N-terminal L-leucyl-L-glutamyl-[protein] + tRNA(Leu) + H(+). The catalysed reaction is N-terminal L-aspartyl-[protein] + L-leucyl-tRNA(Leu) = N-terminal L-leucyl-L-aspartyl-[protein] + tRNA(Leu) + H(+). Functionally, functions in the N-end rule pathway of protein degradation where it conjugates Leu from its aminoacyl-tRNA to the N-termini of proteins containing an N-terminal aspartate or glutamate. The chain is Aspartate/glutamate leucyltransferase from Xanthomonas oryzae pv. oryzae (strain MAFF 311018).